Here is a 1036-residue protein sequence, read N- to C-terminus: DNA-directed RNA polymerase subunit beta (1036 aa).

This sequence belongs to the RNA polymerase beta chain family. In plastids the minimal PEP RNA polymerase catalytic core is composed of four subunits: alpha, beta, beta', and beta''. When a (nuclear-encoded) sigma factor is associated with the core the holoenzyme is formed, which can initiate transcription.

It localises to the plastid. The protein resides in the chloroplast. It carries out the reaction RNA(n) + a ribonucleoside 5'-triphosphate = RNA(n+1) + diphosphate. Its function is as follows. DNA-dependent RNA polymerase catalyzes the transcription of DNA into RNA using the four ribonucleoside triphosphates as substrates. This is DNA-directed RNA polymerase subunit beta from Cyanidioschyzon merolae (strain NIES-3377 / 10D) (Unicellular red alga).